The chain runs to 733 residues: Exosome complex exonuclease RRP6 (733 aa).

Ser138 carries the phosphoserine modification. One can recognise a 3'-5' exonuclease domain in the interval 214–380 (IWVDTSTELE…NIYDQLRNKL (167 aa)). The Mn(2+) site is built by Asp238 and Glu240. 2 residues coordinate Zn(2+): Asp238 and Glu240. AMP contacts are provided by Glu240 and His241. 2 residues coordinate UMP: Glu240 and His241. Asp296 contributes to the Mn(2+) binding site. 3 residues coordinate AMP: Trp299, Lys342, and Gln345. Trp299, Lys342, and Gln345 together coordinate UMP. Residue Asp365 coordinates Mn(2+). Asp365 contacts Zn(2+). The 81-residue stretch at 435–515 (PPEREVLVRE…RDALRNIKNT (81 aa)) folds into the HRDC domain. Thr520 is modified (phosphothreonine). Residues Ser640 and Ser645 each carry the phosphoserine modification. The segment at 662-733 (IQKKQPAKEK…AKGKNLSFKR (72 aa)) is disordered. Residues 667–680 (PAKEKGVTEKDAVD) show a composition bias toward basic and acidic residues. Positions 687 to 697 (ILSNKPGQNNR) are enriched in polar residues. Short sequence motifs (nuclear localization signal) lie at residues 700–704 (KKRRF) and 718–721 (KKRR). Residues 716-733 (AAKKRRPAAKGKNLSFKR) are compositionally biased toward basic residues.

This sequence belongs to the exosome component 10/RRP6 family. As to quaternary structure, component of the RNA exosome complex. Specifically part of the catalytically inactive RNA exosome core complex (Exo-9) which may associate with the catalytic subunits RRP6 and DIS3 in cytoplasmic- and nuclear-specific RNA exosome complex forms. Exo-9 is formed by a hexameric base ring of RNase PH domain-containing subunits and a cap ring consisting of CSL4, RRP4 and RRP40. RRP6 specifically is part of the nuclear form of the RNA exosome complex; the association appears to be mediated by Exo-9 and not by DIS3. Interacts with LRP1. Interacts with NPL3, NOP53 and PAP1.

The protein resides in the nucleus. It localises to the nucleolus. Functionally, nuclear-specific catalytic component of the RNA exosome complex which has 3'-&gt;5' exoribonuclease activity and participates in a multitude of cellular RNA processing and degradation events. In the nucleus, the RNA exosome complex is involved in proper maturation of stable RNA species such as rRNA, snRNA and snoRNA, in the elimination of RNA processing by-products and non-coding 'pervasive' transcripts, such as antisense RNA species and cryptic unstable transcripts (CUTs), and of mRNAs with processing defects, thereby limiting or excluding their export to the cytoplasm. The catalytic inactive RNA exosome core complex of 9 subunits (Exo-9) is proposed to play a pivotal role in the binding and presentation of RNA for ribonucleolysis, and to serve as a scaffold for the association with catalytic subunits and accessory proteins or complexes. RRP6 has 3'-5' exonuclease activity which is not modulated upon association with Exo-9 suggesting that the complex inner RNA-binding path is not used to access its active site. The sequence is that of Exosome complex exonuclease RRP6 (RRP6) from Saccharomyces cerevisiae (strain ATCC 204508 / S288c) (Baker's yeast).